A 412-amino-acid polypeptide reads, in one-letter code: tRNA pseudouridine synthase Pus10 (412 aa).

A THUMP domain is found at 73–197 (HEPSIKFLSN…TGSVEVQIMP (125 aa)). Positions 308 and 376 each coordinate substrate.

This sequence belongs to the pseudouridine synthase Pus10 family.

It carries out the reaction uridine(54) in tRNA = pseudouridine(54) in tRNA. It catalyses the reaction uridine(55) in tRNA = pseudouridine(55) in tRNA. Responsible for synthesis of pseudouridine from uracil-54 and uracil-55 in the psi GC loop of transfer RNAs. The polypeptide is tRNA pseudouridine synthase Pus10 (Vulcanisaeta distributa (strain DSM 14429 / JCM 11212 / NBRC 100878 / IC-017)).